The following is a 352-amino-acid chain: UDP-N-acetylglucosamine--N-acetylmuramyl-(pentapeptide) pyrophosphoryl-undecaprenol N-acetylglucosamine transferase 2 (352 aa).

Residues 11–13, R164, S194, and Q289 contribute to the UDP-N-acetyl-alpha-D-glucosamine site; that span reads SAG.

The protein belongs to the glycosyltransferase 28 family. MurG subfamily.

The protein localises to the cell membrane. The enzyme catalyses di-trans,octa-cis-undecaprenyl diphospho-N-acetyl-alpha-D-muramoyl-L-alanyl-D-glutamyl-meso-2,6-diaminopimeloyl-D-alanyl-D-alanine + UDP-N-acetyl-alpha-D-glucosamine = di-trans,octa-cis-undecaprenyl diphospho-[N-acetyl-alpha-D-glucosaminyl-(1-&gt;4)]-N-acetyl-alpha-D-muramoyl-L-alanyl-D-glutamyl-meso-2,6-diaminopimeloyl-D-alanyl-D-alanine + UDP + H(+). It participates in cell wall biogenesis; peptidoglycan biosynthesis. In terms of biological role, cell wall formation. Catalyzes the transfer of a GlcNAc subunit on undecaprenyl-pyrophosphoryl-MurNAc-pentapeptide (lipid intermediate I) to form undecaprenyl-pyrophosphoryl-MurNAc-(pentapeptide)GlcNAc (lipid intermediate II). The sequence is that of UDP-N-acetylglucosamine--N-acetylmuramyl-(pentapeptide) pyrophosphoryl-undecaprenol N-acetylglucosamine transferase 2 from Bacillus cereus (strain ATCC 10987 / NRS 248).